The chain runs to 239 residues: Terpene cyclase idtB (239 aa).

Transmembrane regions (helical) follow at residues 20-40, 50-70, 75-95, 113-133, and 138-158; these read MADT…ALMI, CMAL…TIVY, RVEL…MVGA, AGFI…ALAM, and GLAY…GGLF. Residue asparagine 164 is glycosylated (N-linked (GlcNAc...) asparagine). Residues 197 to 217 form a helical membrane-spanning segment; it reads EVFGWLASPLVLWSLVTFLLA.

This sequence belongs to the paxB family.

The protein localises to the membrane. It participates in secondary metabolite biosynthesis. In terms of biological role, terpene cyclase; part of the gene cluster that mediates the biosynthesis of paspalitrems, indole-diterpene (IDT) mycotoxins that are potent tremorgens in mammals. The geranylgeranyl diphosphate (GGPP) synthase idtG is proposed to catalyze the first step in IDT biosynthesis via catalysis of a series of iterative condensations of isopentenyl diphosphate (IPP) with dimethylallyl diphosphate (DMAPP), geranyl diphosphate (GPP), and farnesyl diphosphate (FPP), to form GGPP. Condensation of indole-3-glycerol phosphate with GGPP by the prenyltransferase idtC then forms 3-geranylgeranylindole (3-GGI). Epoxidation of the two terminal alkenes of the geranylgeranyl moiety by the FAD-dependent monooxygenase idtM, and cyclization by the terpene cyclase idtB then leads to the production of paspaline. The cytochrome P450 monooxygenase idtP then catalyzes oxidative elimination of the pendant methyl group at C-12 of paspaline and generates the C-10 ketone to yield 13-desoxypaxilline. The cytochrome P450 monooxygenase idtQ may catalyze the C-13 oxidation of 13-desoxypaxilline to afford paxilline. Considering that both paspalicine and paxilline were detected in C.paspali, idtQ also catalyzes the formation of paspalinine from 13-desoxypaxilline via paspalicine as an intermediate. Finally, the alpha-prenyltransferase idtF prenylates paspalinine at the C-20 or the C-21 positions to yield paspalitrems A and C, respectively. The hydroxylation of paspalitrem A at C-32 by a still unknown oxidase affords paspalitrem B. The polypeptide is Terpene cyclase idtB (Claviceps paspali (Rye ergot fungus)).